The sequence spans 294 residues: Cytidine deaminase (294 aa).

2 consecutive CMP/dCMP-type deaminase domains span residues 48-168 and 186-294; these read DEDA…FGPK and LTGD…VLLA. Residue 89–91 participates in substrate binding; sequence NME. Histidine 102 contacts Zn(2+). The Proton donor role is filled by glutamate 104. 2 residues coordinate Zn(2+): cysteine 129 and cysteine 132.

Belongs to the cytidine and deoxycytidylate deaminase family. In terms of assembly, homodimer. It depends on Zn(2+) as a cofactor.

The enzyme catalyses cytidine + H2O + H(+) = uridine + NH4(+). It carries out the reaction 2'-deoxycytidine + H2O + H(+) = 2'-deoxyuridine + NH4(+). Functionally, this enzyme scavenges exogenous and endogenous cytidine and 2'-deoxycytidine for UMP synthesis. The chain is Cytidine deaminase from Escherichia coli O139:H28 (strain E24377A / ETEC).